Consider the following 107-residue polypeptide: Putative double-stranded DNA mimic protein HI_1450 (107 aa).

This sequence belongs to the putative dsDNA mimic protein family. In terms of assembly, monomer in solution. Interacts with the DNA-binding protein HU.

Functionally, may act as a double-stranded DNA (dsDNA) mimic. Probably regulates the activity of the DNA-binding protein HU. This chain is Putative double-stranded DNA mimic protein HI_1450, found in Haemophilus influenzae (strain ATCC 51907 / DSM 11121 / KW20 / Rd).